The following is a 122-amino-acid chain: Large ribosomal subunit protein uL14 (122 aa).

It belongs to the universal ribosomal protein uL14 family. As to quaternary structure, part of the 50S ribosomal subunit. Forms a cluster with proteins L3 and L19. In the 70S ribosome, L14 and L19 interact and together make contacts with the 16S rRNA in bridges B5 and B8.

Its function is as follows. Binds to 23S rRNA. Forms part of two intersubunit bridges in the 70S ribosome. In Shewanella baltica (strain OS223), this protein is Large ribosomal subunit protein uL14.